Consider the following 218-residue polypeptide: Probable transaldolase (218 aa).

Residue Lys-87 is the Schiff-base intermediate with substrate of the active site.

The protein belongs to the transaldolase family. Type 3B subfamily.

It is found in the cytoplasm. The enzyme catalyses D-sedoheptulose 7-phosphate + D-glyceraldehyde 3-phosphate = D-erythrose 4-phosphate + beta-D-fructose 6-phosphate. The protein operates within carbohydrate degradation; pentose phosphate pathway; D-glyceraldehyde 3-phosphate and beta-D-fructose 6-phosphate from D-ribose 5-phosphate and D-xylulose 5-phosphate (non-oxidative stage): step 2/3. Its function is as follows. Transaldolase is important for the balance of metabolites in the pentose-phosphate pathway. This chain is Probable transaldolase, found in Phocaeicola vulgatus (strain ATCC 8482 / DSM 1447 / JCM 5826 / CCUG 4940 / NBRC 14291 / NCTC 11154) (Bacteroides vulgatus).